The primary structure comprises 196 residues: Large ribosomal subunit protein eL15 (196 aa).

The tract at residues 154 to 196 is disordered; that stretch reads PGHRGRSERGLTSAGVKGRGMRRRGKGTEKCRPSVRANANRAK.

This sequence belongs to the eukaryotic ribosomal protein eL15 family.

The sequence is that of Large ribosomal subunit protein eL15 from Methanospirillum hungatei JF-1 (strain ATCC 27890 / DSM 864 / NBRC 100397 / JF-1).